A 142-amino-acid chain; its full sequence is Ribosome-binding factor A (142 aa).

The span at 120 to 130 (EVRRDIDHAPA) shows a compositional bias: basic and acidic residues. Residues 120-142 (EVRRDIDHAPAEDEFPTDGDDGQ) form a disordered region. Positions 131–142 (EDEFPTDGDDGQ) are enriched in acidic residues.

It belongs to the RbfA family. In terms of assembly, monomer. Binds 30S ribosomal subunits, but not 50S ribosomal subunits or 70S ribosomes.

The protein localises to the cytoplasm. In terms of biological role, one of several proteins that assist in the late maturation steps of the functional core of the 30S ribosomal subunit. Associates with free 30S ribosomal subunits (but not with 30S subunits that are part of 70S ribosomes or polysomes). Required for efficient processing of 16S rRNA. May interact with the 5'-terminal helix region of 16S rRNA. This chain is Ribosome-binding factor A, found in Paramagnetospirillum magneticum (strain ATCC 700264 / AMB-1) (Magnetospirillum magneticum).